Consider the following 483-residue polypeptide: Myocilin (483 aa).

An N-terminal signal peptide occupies residues Met-1 to Ala-18. Asn-43 is a glycosylation site (N-linked (GlcNAc...) asparagine). Residues Gly-51 to Gly-162 adopt a coiled-coil conformation. The segment at Ser-153–Arg-179 is disordered. Residues Gly-223–Lys-482 enclose the Olfactomedin-like domain. The cysteines at positions 224 and 412 are disulfide-linked. Residues Asp-359, Asn-407, Ala-408, Ile-456, and Asp-457 each coordinate Ca(2+). Residues Ser-481–Met-483 carry the Microbody targeting signal motif.

Homodimer (via N-terminus). Can also form higher oligomers. Interacts with OLFM3, FN1, NRCAM, GLDN and NFASC. Interacts (via N-terminus) with MYL2. Interacts with SFRP1, FRZB, FZD7, FZD10, FZD1 and WIF1; regulates Wnt signaling. Interacts with SNTA1; regulates muscle hypertrophy. Interacts with ERBB2 and ERBB3; activates ERBB2-ERBB3 signaling pathway. Interacts with SNCG; affects its secretion and its aggregation. Post-translationally, N-glycosylated. Palmitoylated. In terms of processing, undergoes a calcium-dependent proteolytic cleavage at Arg-205 by CAPN2 in the endoplasmic reticulum. The result is the production of two fragments, one of 35 kDa containing the C-terminal olfactomedin-like domain, and another of 20 kDa containing the N-terminal leucine zipper-like domain. Expressed in optic nerve head, ciliary body and retina.

The protein resides in the secreted. It localises to the golgi apparatus. The protein localises to the cytoplasmic vesicle. It is found in the extracellular space. Its subcellular location is the extracellular matrix. The protein resides in the extracellular exosome. It localises to the mitochondrion. The protein localises to the mitochondrion intermembrane space. It is found in the mitochondrion inner membrane. Its subcellular location is the mitochondrion outer membrane. The protein resides in the rough endoplasmic reticulum. It localises to the cell projection. The protein localises to the cilium. It is found in the endoplasmic reticulum. In terms of biological role, secreted glycoprotein regulating the activation of different signaling pathways in adjacent cells to control different processes including cell adhesion, cell-matrix adhesion, cytoskeleton organization and cell migration. Promotes substrate adhesion, spreading and formation of focal contacts. Negatively regulates cell-matrix adhesion and stress fiber assembly through Rho protein signal transduction. Modulates the organization of actin cytoskeleton by stimulating the formation of stress fibers through interactions with components of Wnt signaling pathways. Promotes cell migration through activation of PTK2 and the downstream phosphatidylinositol 3-kinase signaling. Plays a role in bone formation and promotes osteoblast differentiation in a dose-dependent manner through mitogen-activated protein kinase signaling. Mediates myelination in the peripheral nervous system through ERBB2/ERBB3 signaling. Plays a role as a regulator of muscle hypertrophy through the components of dystrophin-associated protein complex. Involved in positive regulation of mitochondrial depolarization. Plays a role in neurite outgrowth. May participate in the obstruction of fluid outflow in the trabecular meshwork. The protein is Myocilin (MYOC) of Canis lupus familiaris (Dog).